A 532-amino-acid polypeptide reads, in one-letter code: Neutral amino acid transporter A (532 aa).

Met1 carries the N-acetylmethionine modification. The segment at Met1 to Met29 is disordered. The Cytoplasmic segment spans residues Met1 to Arg41. 3 consecutive transmembrane segments (helical) span residues His42–Leu62, Met88–Ser108, and Ala119–Ile139. The Extracellular portion of the chain corresponds to Lys140–Thr216. 2 N-linked (GlcNAc...) asparagine glycosylation sites follow: Asn201 and Asn206. The next 6 membrane-spanning stretches (helical) occupy residues Asp217–Leu237, Ala257–Ile277, Ile298–Phe318, Phe328–Thr348, Ile373–Ile393, and Val418–Ile438. The interval Glu495–Leu532 is disordered. Residues Ser507, Ser527, and Ser530 each carry the phosphoserine modification.

Belongs to the dicarboxylate/amino acid:cation symporter (DAACS) (TC 2.A.23) family. SLC1A4 subfamily.

The protein localises to the membrane. Its subcellular location is the melanosome. The catalysed reaction is L-threonine(in) + Na(+)(in) = L-threonine(out) + Na(+)(out). The enzyme catalyses L-serine(in) + Na(+)(in) = L-serine(out) + Na(+)(out). It catalyses the reaction L-cysteine(in) + Na(+)(in) = L-cysteine(out) + Na(+)(out). It carries out the reaction L-alanine(in) + Na(+)(in) = L-alanine(out) + Na(+)(out). The catalysed reaction is L-proline(in) + Na(+)(in) = L-proline(out) + Na(+)(out). The enzyme catalyses 4-hydroxy-L-proline(in) + Na(+)(in) = 4-hydroxy-L-proline(out) + Na(+)(out). In terms of biological role, sodium-dependent neutral amino-acid transporter that mediates transport of alanine, serine, cysteine, proline, hydroxyproline and threonine. The protein is Neutral amino acid transporter A (Slc1a4) of Mus musculus (Mouse).